A 54-amino-acid chain; its full sequence is Large ribosomal subunit protein bL32c (54 aa).

This sequence belongs to the bacterial ribosomal protein bL32 family.

The protein resides in the plastid. Its subcellular location is the chloroplast. The polypeptide is Large ribosomal subunit protein bL32c (Piper cenocladum (Ant piper)).